The chain runs to 638 residues: Nitrous-oxide reductase (638 aa).

Residues 1-52 (MSDKDSKNTPQVPEKLGLSRRGFLGASAVTGAAVAATALGGAVMTRESWAQA) constitute a signal peptide (tat-type signal). The Cu cation site is built by His129, His130, and His178. Tyr256, Glu259, Met267, Asp273, and Asn324 together coordinate Ca(2+). Residues His326, His382, and His433 each contribute to the Cu cation site. Ca(2+) is bound by residues Lys454 and Glu469. Residues His494, His583, Cys618, Trp620, Cys622, His626, and Met629 each contribute to the Cu cation site. Positions 542 to 638 (NKVRVYMTSM…MVGRMMVEPA (97 aa)) are COX2-like.

This sequence belongs to the NosZ family. In the C-terminal section; belongs to the cytochrome c oxidase subunit 2 family. As to quaternary structure, homodimer. Requires Ca(2+) as cofactor. Cu cation serves as cofactor. In terms of processing, predicted to be exported by the Tat system. The position of the signal peptide cleavage has not been experimentally proven. Post-translationally, the N-terminus is blocked.

The protein localises to the periplasm. It carries out the reaction N2 + 2 Fe(III)-[cytochrome c] + H2O = nitrous oxide + 2 Fe(II)-[cytochrome c] + 2 H(+). The protein operates within nitrogen metabolism; nitrate reduction (denitrification); dinitrogen from nitrate: step 4/4. Its function is as follows. Nitrous-oxide reductase is part of a bacterial respiratory system which is activated under anaerobic conditions in the presence of nitrate or nitrous oxide. This chain is Nitrous-oxide reductase (nosZ), found in Stutzerimonas stutzeri (Pseudomonas stutzeri).